Here is a 355-residue protein sequence, read N- to C-terminus: Anthranilate phosphoribosyltransferase (355 aa).

5-phospho-alpha-D-ribose 1-diphosphate-binding positions include G91, 94 to 95 (GD), T99, 101 to 104 (NIST), 119 to 127 (KHGNRAMSS), and A131. G91 contributes to the anthranilate binding site. S103 is a binding site for Mg(2+). N122 serves as a coordination point for anthranilate. R177 is an anthranilate binding site. Residues D234 and E235 each coordinate Mg(2+).

It belongs to the anthranilate phosphoribosyltransferase family. Homodimer. The cofactor is Mg(2+).

It catalyses the reaction N-(5-phospho-beta-D-ribosyl)anthranilate + diphosphate = 5-phospho-alpha-D-ribose 1-diphosphate + anthranilate. It participates in amino-acid biosynthesis; L-tryptophan biosynthesis; L-tryptophan from chorismate: step 2/5. Its function is as follows. Participates in the tryptophan-dependent indole-3-acetic acid production, which is a phytohormone released by A.brasilense. In terms of biological role, catalyzes the transfer of the phosphoribosyl group of 5-phosphorylribose-1-pyrophosphate (PRPP) to anthranilate to yield N-(5'-phosphoribosyl)-anthranilate (PRA). In Azospirillum brasilense, this protein is Anthranilate phosphoribosyltransferase.